The primary structure comprises 217 residues: Probable transaldolase (217 aa).

The Schiff-base intermediate with substrate role is filled by Lys-83.

The protein belongs to the transaldolase family. Type 3B subfamily.

It is found in the cytoplasm. It catalyses the reaction D-sedoheptulose 7-phosphate + D-glyceraldehyde 3-phosphate = D-erythrose 4-phosphate + beta-D-fructose 6-phosphate. The protein operates within carbohydrate degradation; pentose phosphate pathway; D-glyceraldehyde 3-phosphate and beta-D-fructose 6-phosphate from D-ribose 5-phosphate and D-xylulose 5-phosphate (non-oxidative stage): step 2/3. Functionally, transaldolase is important for the balance of metabolites in the pentose-phosphate pathway. This chain is Probable transaldolase, found in Novosphingobium aromaticivorans (strain ATCC 700278 / DSM 12444 / CCUG 56034 / CIP 105152 / NBRC 16084 / F199).